Here is a 491-residue protein sequence, read N- to C-terminus: MALLRGLLVLSLSCLQGPCFTFSPVSAVDLPGQQPVSEQAQQKLPLPALFKLDNQDFGDHATLKRSPGHCKSVPTAEETRRLAQAMMAFTTDLFSLVAQTSTSSNLVLSPLSVALALSHLALGAQNQTLHSLHRVLHMNTGSCLPHLLSHFYQNLGPGTIRLAARIYLQKGFPIKDDFLEQSERLFGAKPVKLTGKQEEDLANINQWVKEATEGKIEDFLSELPDSTVLLLLNAIHFHGFWRTKFDPSLTQKDFFHLDERFTVSVDMMHAVSYPLRWFLLEQPEIQVAHFPFKNNMSFVVVMPTYFEWNVSEVLANLTWDTLYHPSLQERPTKVWLPKLHLQQQLDLVATLSQLGLQELFQGPDLRGISEQNLVVSSVQHQSTMELSEAGVEAAAATSVAMNRMSLSSFTVNRPFLFFIMEDTIGVPLFVGSVRNPNPSALPQLQEQRDSPDNRLIGQNDKADFHGGKTFGPDLKLAPRMEEDYPQFSSPK.

The signal sequence occupies residues 1 to 27 (MALLRGLLVLSLSCLQGPCFTFSPVSA). Positions 28 to 39 (VDLPGQQPVSEQ) are excised as a propeptide. C70 and C143 are oxidised to a cystine. 4 N-linked (GlcNAc...) asparagine glycosylation sites follow: N126, N295, N309, and N316. The interval 439–491 (SALPQLQEQRDSPDNRLIGQNDKADFHGGKTFGPDLKLAPRMEEDYPQFSSPK) is disordered. Y484 bears the Sulfotyrosine mark.

The protein belongs to the serpin family. As to quaternary structure, forms protease inhibiting heterodimer with TMPRSS7. In terms of processing, proteolytically cleaved at Pro-35 by both the prolyl endopeptidase FAP form and antiplasmin-cleaving enzyme FAP soluble form to generate mature alpha-2-antiplasmin. As to expression, expressed by the liver and secreted in plasma.

The protein resides in the secreted. Its function is as follows. Serine protease inhibitor. The major targets of this inhibitor are plasmin and trypsin, but it also inactivates matriptase-3/TMPRSS7 and chymotrypsin. The chain is Alpha-2-antiplasmin (Serpinf2) from Mus musculus (Mouse).